The primary structure comprises 568 residues: Putative U-box domain-containing protein 55 (568 aa).

Positions 217-464 form a coiled coil; the sequence is QSESDRNDQL…KVAAEKDAAS (248 aa). A U-box domain is found at 496 to 568; that stretch reads QPPSYFICPI…AIQEWLQRNS (73 aa).

The catalysed reaction is S-ubiquitinyl-[E2 ubiquitin-conjugating enzyme]-L-cysteine + [acceptor protein]-L-lysine = [E2 ubiquitin-conjugating enzyme]-L-cysteine + N(6)-ubiquitinyl-[acceptor protein]-L-lysine.. It functions in the pathway protein modification; protein ubiquitination. In terms of biological role, functions as an E3 ubiquitin ligase. The polypeptide is Putative U-box domain-containing protein 55 (PUB55) (Arabidopsis thaliana (Mouse-ear cress)).